A 254-amino-acid polypeptide reads, in one-letter code: Ubiquinone/menaquinone biosynthesis C-methyltransferase UbiE (254 aa).

Residues T77, D98, 126–127 (NA), and S143 each bind S-adenosyl-L-methionine.

It belongs to the class I-like SAM-binding methyltransferase superfamily. MenG/UbiE family.

It catalyses the reaction a 2-demethylmenaquinol + S-adenosyl-L-methionine = a menaquinol + S-adenosyl-L-homocysteine + H(+). The enzyme catalyses a 2-methoxy-6-(all-trans-polyprenyl)benzene-1,4-diol + S-adenosyl-L-methionine = a 5-methoxy-2-methyl-3-(all-trans-polyprenyl)benzene-1,4-diol + S-adenosyl-L-homocysteine + H(+). It participates in quinol/quinone metabolism; menaquinone biosynthesis; menaquinol from 1,4-dihydroxy-2-naphthoate: step 2/2. The protein operates within cofactor biosynthesis; ubiquinone biosynthesis. Functionally, methyltransferase required for the conversion of demethylmenaquinol (DMKH2) to menaquinol (MKH2) and the conversion of 2-polyprenyl-6-methoxy-1,4-benzoquinol (DDMQH2) to 2-polyprenyl-3-methyl-6-methoxy-1,4-benzoquinol (DMQH2). The sequence is that of Ubiquinone/menaquinone biosynthesis C-methyltransferase UbiE from Hydrogenovibrio crunogenus (strain DSM 25203 / XCL-2) (Thiomicrospira crunogena).